The chain runs to 243 residues: MRAPQHNSDFSRTVDQLADDPNPYEPEIGSMPQNDLTRADLDNVNKTGTTTIGISTADGVVIATDMRASLGGRFVSNKNVQKVEQIHPTGALTLVGSVGGAQSFISSLRAEVNLYESRRGEQMSIDALATLAGNFARGGPFFAIHPILGGVDEEGSHVYSIDPAGGVMEDDYTVTGSGMQLAYGHLEQAYEEDMSNEEAVSVAAHGIKSAVERDTGSGNGVFLCEITDEGVDIHGHHDFDEVL.

The span at 1-14 shows a compositional bias: polar residues; the sequence is MRAPQHNSDFSRTV. A disordered region spans residues 1-34; the sequence is MRAPQHNSDFSRTVDQLADDPNPYEPEIGSMPQN. The propeptide at 1–48 is removed in mature form; by autocatalysis; the sequence is MRAPQHNSDFSRTVDQLADDPNPYEPEIGSMPQNDLTRADLDNVNKTG. The active-site Nucleophile is Thr-49.

The protein belongs to the peptidase T1B family. The 20S proteasome core is composed of 14 alpha and 14 beta subunits that assemble into four stacked heptameric rings, resulting in a barrel-shaped structure. The two inner rings, each composed of seven catalytic beta subunits, are sandwiched by two outer rings, each composed of seven alpha subunits. The catalytic chamber with the active sites is on the inside of the barrel. Has a gated structure, the ends of the cylinder being occluded by the N-termini of the alpha-subunits. Is capped at one or both ends by the proteasome regulatory ATPase, PAN.

Its subcellular location is the cytoplasm. It catalyses the reaction Cleavage of peptide bonds with very broad specificity.. Its activity is regulated as follows. The formation of the proteasomal ATPase PAN-20S proteasome complex, via the docking of the C-termini of PAN into the intersubunit pockets in the alpha-rings, triggers opening of the gate for substrate entry. Interconversion between the open-gate and close-gate conformations leads to a dynamic regulation of the 20S proteasome proteolysis activity. In terms of biological role, component of the proteasome core, a large protease complex with broad specificity involved in protein degradation. In Haloterrigena turkmenica (strain ATCC 51198 / DSM 5511 / JCM 9101 / NCIMB 13204 / VKM B-1734 / 4k) (Halococcus turkmenicus), this protein is Proteasome subunit beta 1.